The chain runs to 145 residues: Large ribosomal subunit protein uL24 (145 aa).

Disordered regions lie at residues 1 to 21 (MKFNPFVTSDRSKNRKRHFNA) and 122 to 145 (KAKSRQVGKEKGKYKEETIEKMQE). Lys136 is covalently cross-linked (Glycyl lysine isopeptide (Lys-Gly) (interchain with G-Cter in SUMO2)). Phosphothreonine is present on Thr139.

Belongs to the universal ribosomal protein uL24 family. As to quaternary structure, component of the large ribosomal subunit. Interacts with DHX33. In terms of processing, ufmylated by UFL1 in response to endoplasmic reticulum stress, promoting reticulophagy of endoplasmic reticulum sheets.

The protein localises to the cytoplasm. Component of the large ribosomal subunit. The ribosome is a large ribonucleoprotein complex responsible for the synthesis of proteins in the cell. This chain is Large ribosomal subunit protein uL24 (RPL26), found in Bos taurus (Bovine).